A 152-amino-acid chain; its full sequence is Acidic phospholipase A2 homolog taipoxin gamma chain (152 aa).

An N-terminal signal peptide occupies residues 1-19; sequence MHPAHLLVLLAVCVSLLGS. Disulfide bonds link Cys38-Cys104, Cys42-Cys46, Cys54-Cys151, Cys56-Cys72, Cys71-Cys132, Cys78-Cys125, Cys88-Cys118, and Cys111-Cys123. N-linked (GlcNAc...) asparagine glycosylation occurs at Asn97.

Belongs to the phospholipase A2 family. Group I subfamily. D49 sub-subfamily. Heterotrimer of alpha, beta, and gamma chains; non-covalently linked. Post-translationally, contains 0.9% fucose, 2.2% mannose, 4.2% N-acetyl-D-glucosamine, 3.5% galactose, and 3.8% N-acetyl-neuraminic acid (sialic acid). Expressed by the venom gland.

The protein resides in the secreted. Its function is as follows. Heterotrimer: Snake venom phospholipase A2 (PLA2) heterotrimer that acts as a potent presynaptic neurotoxin by blocking synaptic transmission and synaptic vesicle recycling. May act by binding in a calcium-dependent fashion to neurotonal pentraxin-1 (NPTX1) and neurotonal pentraxin-2 (NPTX2), but not to neuronal pentraxin receptor (NPTXR). Also binds to taipoxin-associated calcium binding protein 49 (RCN2), a protein localized in the lumen of endoplasmic reticulum. Monomer (gamma chain): Snake venom phospholipase A2 homolog that is neither toxic nor enzymatically active. Does not bind calcium. The polypeptide is Acidic phospholipase A2 homolog taipoxin gamma chain (Oxyuranus scutellatus scutellatus (Australian taipan)).